The primary structure comprises 1531 residues: Multidrug resistance-associated protein 1 (1531 aa).

Topologically, residues 1–33 (MALRGFCSADGSDPLWDWNVTWNTSNPDFTKCF) are extracellular. Residues asparagine 19 and asparagine 23 are each glycosylated (N-linked (GlcNAc...) asparagine). The helical transmembrane segment at 34-54 (QNTVLVWVPCFYLWACFPFYF) threads the bilayer. The Cytoplasmic segment spans residues 55 to 74 (LYLSRHDRGYIQMTPLNKTK). The chain crosses the membrane as a helical span at residues 75–95 (TALGFLLWIVCWADLFYSFWE). The Extracellular segment spans residues 96-100 (RSRGI). The helical transmembrane segment at 101–121 (FLAPVFLVSPTLLGITMLLAT) threads the bilayer. Residues 122-133 (FLIQLERRKGVQ) are Cytoplasmic-facing. The helical transmembrane segment at 134–154 (SSGIMLTFWLVALVCALAILR) threads the bilayer. Residues 155 to 172 (SKIMTALKEDAQVDLFRD) lie on the Extracellular side of the membrane. Residues 173 to 193 (ITFYVYFSLLLIQLVLSCFSD) traverse the membrane as a helical segment. Over 194–316 (RSPLFSETIH…KEWNPSLFKV (123 aa)) the chain is Cytoplasmic. Tyrosine 277 bears the Phosphotyrosine mark. Serine 289 carries the post-translational modification Phosphoserine. The chain crosses the membrane as a helical span at residues 317 to 337 (LYKTFGPYFLMSFFFKAIHDL). Residues 325–608 (FLMSFFFKAI…LPMVISSIVQ (284 aa)) form the ABC transmembrane type-1 1 domain. At 338 to 363 (MMFSGPQILKLLIKFVNDTKAPDWQG) the chain is on the extracellular side. The chain crosses the membrane as a helical span at residues 364–384 (YFYTVLLFVTACLQTLVLHQY). Over 385–440 (FHICFVSGMRIKTAVIGAVYRKALVITNSARKSSTVGEIVNLMSVDAQRFMDLATY) the chain is Cytoplasmic. A helical membrane pass occupies residues 441-461 (INMIWSAPLQVILALYLLWLN). Residues 462-464 (LGP) are Extracellular-facing. A helical membrane pass occupies residues 465 to 485 (SVLAGVAVMVLMVPVNAVMAM). The Cytoplasmic segment spans residues 486–547 (KTKTYQVAHM…VLKKSAYLSA (62 aa)). Lysine 503 is subject to N6-succinyllysine. The helical transmembrane segment at 548-568 (VGTFTWVCTPFLVALCTFAVY) threads the bilayer. Residues 569–590 (VTIDENNILDAQTAFVSLALFN) are Extracellular-facing. Residues 591–611 (ILRFPLNILPMVISSIVQASV) form a helical membrane-spanning segment. The Cytoplasmic portion of the chain corresponds to 612 to 967 (SLKRLRIFLS…VKLSVYWDYM (356 aa)). The ABC transporter 1 domain maps to 644–868 (ITVRNATFTW…DGAFAEFLRT (225 aa)). ATP contacts are provided by residues tryptophan 653, 678–685 (GQVGCGKS), and glutamine 713. A phosphoserine mark is found at serine 905, serine 915, and serine 930. Residues 968 to 988 (KAIGLFISFLSIFLFMCNHVS) form a helical membrane-spanning segment. In terms of domain architecture, ABC transmembrane type-1 2 spans 975-1256 (SFLSIFLFMC…LVRMSSEMET (282 aa)). Residues 989–1025 (ALASNYWLSLWTDDPIVNGTQEHTKVRLSVYGALGIS) lie on the Extracellular side of the membrane. Asparagine 1006 carries an N-linked (GlcNAc...) asparagine glycan. The chain crosses the membrane as a helical span at residues 1026-1046 (QGIAVFGYSMAVSIGGILASR). At 1047 to 1089 (CLHVDLLHSILRSPMSFFERTPSGNLVNRFSKELDTVDSMIPE) the chain is on the cytoplasmic side. A helical membrane pass occupies residues 1090-1110 (VIKMFMGSLFNVIGACIVILL). Residue alanine 1111 is a topological domain, extracellular. Residues 1112 to 1132 (TPIAAIIIPPLGLIYFFVQRF) form a helical membrane-spanning segment. Over 1133 to 1203 (YVASSRQLKR…VANRWLAVRL (71 aa)) the chain is Cytoplasmic. A helical transmembrane segment spans residues 1204 to 1224 (ECVGNCIVLFAALFAVISRHS). Residues 1225–1226 (LS) are Extracellular-facing. A helical membrane pass occupies residues 1227 to 1247 (AGLVGLSVSYSLQVTTYLNWL). Topologically, residues 1248–1531 (VRMSSEMETN…YSMAKDAGLV (284 aa)) are cytoplasmic. The ABC transporter 2 domain maps to 1293 to 1527 (VEFRNYCLRY…RGLFYSMAKD (235 aa)). An ATP-binding site is contributed by 1327–1334 (GRTGAGKS).

This sequence belongs to the ABC transporter superfamily. ABCC family. Conjugate transporter (TC 3.A.1.208) subfamily. In terms of assembly, (Microbial infection) Interacts with human cytomegalovirus protein UL138; this interaction mediates MRP1 degradation via the lysosome. In terms of tissue distribution, lung, testis and peripheral blood mononuclear cells.

Its subcellular location is the cell membrane. It localises to the basolateral cell membrane. The enzyme catalyses ATP + H2O + xenobioticSide 1 = ADP + phosphate + xenobioticSide 2.. The catalysed reaction is an S-substituted glutathione(in) + ATP + H2O = an S-substituted glutathione(out) + ADP + phosphate + H(+). It carries out the reaction sphing-4-enine 1-phosphate(in) + ATP + H2O = sphing-4-enine 1-phosphate(out) + ADP + phosphate + H(+). It catalyses the reaction leukotriene C4(in) + ATP + H2O = leukotriene C4(out) + ADP + phosphate + H(+). The enzyme catalyses 17beta-estradiol 17-O-(beta-D-glucuronate)(in) + ATP + H2O = 17beta-estradiol 17-O-(beta-D-glucuronate)(out) + ADP + phosphate + H(+). The catalysed reaction is daunorubicin(in) + ATP + H2O = daunorubicin(out) + ADP + phosphate + H(+). It carries out the reaction vincristine(in) + ATP + H2O = vincristine(out) + ADP + phosphate + H(+). It catalyses the reaction 2',3'-cGAMP(in) + ATP + H2O = 2',3'-cGAMP(out) + ADP + phosphate + H(+). The enzyme catalyses S-[(2E,6E,10E)-geranylgeranyl]-L-glutathione(in) + ATP + H2O = S-[(2E,6E,10E)-geranylgeranyl]-L-glutathione(out) + ADP + phosphate + H(+). The catalysed reaction is prostaglandin A2-S-(R)-glutathione(in) + ATP + H2O = prostaglandin A2-S-(R)-glutathione(out) + ADP + phosphate + H(+). It carries out the reaction prostaglandin A2-S-(S)-glutathione(in) + ATP + H2O = prostaglandin A2-S-(S)-glutathione(out) + ADP + phosphate + H(+). With respect to regulation, MK 571 inhibits sphingosine 1-phosphate and leukotriene C4 export. Functionally, mediates export of organic anions and drugs from the cytoplasm. Mediates ATP-dependent transport of glutathione and glutathione conjugates, leukotriene C4, estradiol-17-beta-o-glucuronide, methotrexate, antiviral drugs and other xenobiotics. Confers resistance to anticancer drugs by decreasing accumulation of drug in cells, and by mediating ATP- and GSH-dependent drug export. Hydrolyzes ATP with low efficiency. Catalyzes the export of sphingosine 1-phosphate from mast cells independently of their degranulation. Participates in inflammatory response by allowing export of leukotriene C4 from leukotriene C4-synthesizing cells. Mediates ATP-dependent, GSH-independent cyclic GMP-AMP (cGAMP) export. Thus, by limiting intracellular cGAMP concentrations negatively regulates the cGAS-STING pathway. Exports S-geranylgeranyl-glutathione (GGG) in lymphoid cells and stromal compartments of lymphoid organs. ABCC1 (via extracellular transport) with GGT5 (via GGG catabolism) establish GGG gradients within lymphoid tissues to position P2RY8-positive lymphocytes at germinal centers in lymphoid follicles and restrict their chemotactic transmigration from blood vessels to the bone marrow parenchyma. Mediates basolateral export of GSH-conjugated R- and S-prostaglandin A2 diastereomers in polarized epithelial cells. In Homo sapiens (Human), this protein is Multidrug resistance-associated protein 1.